Reading from the N-terminus, the 268-residue chain is Glucosamine-6-phosphate deaminase (268 aa).

Asp-72 acts as the Proton acceptor; for enolization step in catalysis. Asp-141 serves as the catalytic For ring-opening step. The Proton acceptor; for ring-opening step role is filled by His-143. The active-site For ring-opening step is the Glu-148.

Belongs to the glucosamine/galactosamine-6-phosphate isomerase family. NagB subfamily.

It catalyses the reaction alpha-D-glucosamine 6-phosphate + H2O = beta-D-fructose 6-phosphate + NH4(+). The protein operates within amino-sugar metabolism; N-acetylneuraminate degradation; D-fructose 6-phosphate from N-acetylneuraminate: step 5/5. Allosterically activated by N-acetylglucosamine 6-phosphate (GlcNAc6P). Its function is as follows. Catalyzes the reversible isomerization-deamination of glucosamine 6-phosphate (GlcN6P) to form fructose 6-phosphate (Fru6P) and ammonium ion. This Borreliella afzelii (strain PKo) (Borrelia afzelii) protein is Glucosamine-6-phosphate deaminase.